A 202-amino-acid chain; its full sequence is Ribonuclease HII (202 aa).

An RNase H type-2 domain is found at 14–202 (LPLAGVDEAG…VAQFSLFPAA (189 aa)). Residues D20, E21, and D111 each coordinate a divalent metal cation.

The protein belongs to the RNase HII family. Mn(2+) serves as cofactor. Requires Mg(2+) as cofactor.

It is found in the cytoplasm. The catalysed reaction is Endonucleolytic cleavage to 5'-phosphomonoester.. Endonuclease that specifically degrades the RNA of RNA-DNA hybrids. This Rhizorhabdus wittichii (strain DSM 6014 / CCUG 31198 / JCM 15750 / NBRC 105917 / EY 4224 / RW1) (Sphingomonas wittichii) protein is Ribonuclease HII.